A 410-amino-acid chain; its full sequence is Extracellular serine proteinase (410 aa).

The signal sequence occupies residues 1–19 (MKRGGLWLLLGLLVLSACS). Positions 20–132 (SNPPAASTQE…IEADQEVRAF (113 aa)) are excised as a propeptide. The region spanning 45-130 (YIVVYKENAD…AYIEADQEVR (86 aa)) is the Inhibitor I9 domain. The 272-residue stretch at 139 to 410 (TWGLDRIDQR…SPNLLLYTPF (272 aa)) folds into the Peptidase S8 domain. Active-site charge relay system residues include aspartate 171, histidine 204, and serine 356.

The protein belongs to the peptidase S8 family. Post-translationally, contains 4 Cys residues that form two disulfide bonds. In terms of processing, glycosylated. This proteinase has a 0.7% carbohydrate content.

The protein resides in the secreted. Functionally, serine proteinase with preferred activity for amino acids with aromatic side groups at the P1' side of the scissible bond. This is Extracellular serine proteinase from Thermus sp. (strain Rt41A).